The primary structure comprises 717 residues: Choline transporter-like protein 5 (717 aa).

The disordered stretch occupies residues 1-24 (MNDTEKPADTASEEEDFGDPRTYD). Topologically, residues 1 to 38 (MNDTEKPADTASEEEDFGDPRTYDPDFKGPVSNRSCTD) are cytoplasmic. The helical transmembrane segment at 39–59 (VLCCMIFLLCIVGYIVLGLVA) threads the bilayer. Residues 60–242 (WVHGDPRRAA…KVFEDYATTW (183 aa)) are Extracellular-facing. 2 N-linked (GlcNAc...) asparagine glycosylation sites follow: asparagine 88 and asparagine 190. A helical transmembrane segment spans residues 243–263 (YWILIGLMIAMVLSWIFLILL). At 264-265 (RF) the chain is on the cytoplasmic side. A helical transmembrane segment spans residues 266–286 (IAGCLFWVFMIGVIGIIGYGI). Topologically, residues 287–325 (WHCYQQYTNLQEHPRSVLTVYDIGIQTNISMYFELQQTW) are extracellular. Asparagine 314 carries an N-linked (GlcNAc...) asparagine glycan. The helical transmembrane segment at 326-346 (FTLMIILCIIEVIVILMLIFL) threads the bilayer. Residues 347–351 (RNRIR) are Cytoplasmic-facing. The helical transmembrane segment at 352–372 (VAIILLKEGSKAIGYVPSTLV) threads the bilayer. Residues 373–374 (YP) are Extracellular-facing. Residues 375–395 (ALTFILLSICICYWVVTAVFL) form a helical membrane-spanning segment. At 396–460 (ATSGVPVYKV…QYIPTFHVYN (65 aa)) the chain is on the cytoplasmic side. The chain crosses the membrane as a helical span at residues 461-481 (LFVFLWLINFVIALGQCALAG). Residues 482 to 515 (AFATYYWAMKKPDDIPRYPLFTAFGRAIRYHTGS) are Extracellular-facing. Residues 516–536 (LAFGSLIIALIQMFKIVLEYL) form a helical membrane-spanning segment. The Cytoplasmic portion of the chain corresponds to 537–610 (NHRLKRTENT…KVAVTDEVTY (74 aa)). A helical transmembrane segment spans residues 611-631 (FVLFLGKILVAGSIGVLAFLF). Residues 632-649 (FTQRLPVIAQGPASLNYY) are Extracellular-facing. The chain crosses the membrane as a helical span at residues 650-670 (WVPLLTVILGSYLIAHGFFSV). Over 671–717 (YAMCVETIFICFLEDLERNDGSTARPYYVSQPLLKIFQEENLQTKQQ) the chain is Cytoplasmic.

This sequence belongs to the CTL (choline transporter-like) family.

It is found in the cell membrane. The enzyme catalyses choline(out) + n H(+)(in) = choline(in) + n H(+)(out). Choline/H+ antiporter. In Macaca fascicularis (Crab-eating macaque), this protein is Choline transporter-like protein 5 (SLC44A5).